Here is a 301-residue protein sequence, read N- to C-terminus: tRNA-cytidine(32) 2-sulfurtransferase (301 aa).

The PP-loop motif motif lies at 55-60 (SGGKDS). Cysteine 130, cysteine 133, and cysteine 221 together coordinate [4Fe-4S] cluster.

This sequence belongs to the TtcA family. In terms of assembly, homodimer. The cofactor is Mg(2+). [4Fe-4S] cluster is required as a cofactor.

It is found in the cytoplasm. It carries out the reaction cytidine(32) in tRNA + S-sulfanyl-L-cysteinyl-[cysteine desulfurase] + AH2 + ATP = 2-thiocytidine(32) in tRNA + L-cysteinyl-[cysteine desulfurase] + A + AMP + diphosphate + H(+). The protein operates within tRNA modification. Its function is as follows. Catalyzes the ATP-dependent 2-thiolation of cytidine in position 32 of tRNA, to form 2-thiocytidine (s(2)C32). The sulfur atoms are provided by the cysteine/cysteine desulfurase (IscS) system. The chain is tRNA-cytidine(32) 2-sulfurtransferase from Acinetobacter baumannii (strain AB307-0294).